We begin with the raw amino-acid sequence, 192 residues long: Adenylate kinase (192 aa).

10–18 contributes to the ATP binding site; it reads GVPGVGGTT.

The protein belongs to the archaeal adenylate kinase family. As to quaternary structure, monomer.

Its subcellular location is the cytoplasm. The catalysed reaction is AMP + ATP = 2 ADP. The chain is Adenylate kinase from Methanococcus maripaludis (strain C7 / ATCC BAA-1331).